The primary structure comprises 625 residues: DNA-directed RNA polymerase subunit gamma (625 aa).

4 residues coordinate Zn(2+): C71, C73, C86, and C89. Residues D467, D469, and D471 each coordinate Mg(2+).

Belongs to the RNA polymerase beta' chain family. RpoC1 subfamily. As to quaternary structure, in cyanobacteria the RNAP catalytic core is composed of 2 alpha, 1 beta, 1 beta', 1 gamma and 1 omega subunit. When a sigma factor is associated with the core the holoenzyme is formed, which can initiate transcription. Requires Mg(2+) as cofactor. It depends on Zn(2+) as a cofactor.

The enzyme catalyses RNA(n) + a ribonucleoside 5'-triphosphate = RNA(n+1) + diphosphate. In terms of biological role, DNA-dependent RNA polymerase catalyzes the transcription of DNA into RNA using the four ribonucleoside triphosphates as substrates. This is DNA-directed RNA polymerase subunit gamma from Rippkaea orientalis (strain PCC 8801 / RF-1) (Cyanothece sp. (strain PCC 8801)).